Consider the following 139-residue polypeptide: Protein GOS9 (139 aa).

In terms of domain architecture, Jacalin-type lectin spans 5–139 (LVKIGTWGGN…VDSIGVYVHI (135 aa)).

Expressed mainly in roots.

This is Protein GOS9 (GOS9) from Oryza sativa subsp. indica (Rice).